We begin with the raw amino-acid sequence, 300 residues long: Tyrosine recombinase XerC (300 aa).

The Core-binding (CB) domain occupies 4–90; sequence VALSLDVSRF…ALRSFFDWLV (87 aa). The Tyr recombinase domain occupies 111-290; sequence HLPKNIDVDD…DFQHLASVYD (180 aa). Catalysis depends on residues Arg150, Lys174, His242, Arg245, and His268. The active-site O-(3'-phospho-DNA)-tyrosine intermediate is Tyr277.

It belongs to the 'phage' integrase family. XerC subfamily. In terms of assembly, forms a cyclic heterotetrameric complex composed of two molecules of XerC and two molecules of XerD, in which XerC interacts with XerD via its C-terminal region, XerD interacts with XerC via its C-terminal region and so on.

The protein resides in the cytoplasm. FtsK may regulate the catalytic switch between XerC and XerD in the heterotetrameric complex during the two steps of the recombination process. Functionally, site-specific tyrosine recombinase, which acts by catalyzing the cutting and rejoining of the recombining DNA molecules. Binds cooperatively to specific DNA consensus sequences that are separated from XerD binding sites by a short central region, forming the heterotetrameric XerC-XerD complex that recombines DNA substrates. The complex is essential to convert dimers of the bacterial chromosome into monomers to permit their segregation at cell division. It also contributes to the segregational stability of plasmids. In the complex XerC specifically exchanges the top DNA strands. This Salmonella typhi protein is Tyrosine recombinase XerC.